We begin with the raw amino-acid sequence, 364 residues long: Ferrochelatase (364 aa).

Positions 213 and 294 each coordinate Fe cation.

This sequence belongs to the ferrochelatase family.

The protein localises to the cytoplasm. It carries out the reaction heme b + 2 H(+) = protoporphyrin IX + Fe(2+). Its pathway is porphyrin-containing compound metabolism; protoheme biosynthesis; protoheme from protoporphyrin-IX: step 1/1. Catalyzes the ferrous insertion into protoporphyrin IX. This Chromobacterium violaceum (strain ATCC 12472 / DSM 30191 / JCM 1249 / CCUG 213 / NBRC 12614 / NCIMB 9131 / NCTC 9757 / MK) protein is Ferrochelatase.